Reading from the N-terminus, the 98-residue chain is Probable sodium channel toxin Ts27 (98 aa).

The signal sequence occupies residues 1-22 (MYNMVSLFIVAVLLLTYANVEG). Intrachain disulfides connect Cys36/Cys88, Cys40/Cys63, Cys49/Cys68, and Cys53/Cys70.

The protein belongs to the long (4 C-C) scorpion toxin superfamily. Sodium channel inhibitor family. In terms of tissue distribution, expressed by the venom gland.

The protein resides in the secreted. Probable sodium channel toxin. This Tityus serrulatus (Brazilian scorpion) protein is Probable sodium channel toxin Ts27.